We begin with the raw amino-acid sequence, 284 residues long: tRNA uridine(34) hydroxylase (284 aa).

Positions 132–226 (TGRPVVMLDT…YFEEVGGAHY (95 aa)) constitute a Rhodanese domain. Catalysis depends on Cys186, which acts as the Cysteine persulfide intermediate.

The protein belongs to the TrhO family.

The enzyme catalyses uridine(34) in tRNA + AH2 + O2 = 5-hydroxyuridine(34) in tRNA + A + H2O. Its function is as follows. Catalyzes oxygen-dependent 5-hydroxyuridine (ho5U) modification at position 34 in tRNAs. This Burkholderia lata (strain ATCC 17760 / DSM 23089 / LMG 22485 / NCIMB 9086 / R18194 / 383) protein is tRNA uridine(34) hydroxylase.